A 222-amino-acid polypeptide reads, in one-letter code: GTP cyclohydrolase 1 (222 aa).

Zn(2+) is bound by residues Cys-111, His-114, and Cys-182.

The protein belongs to the GTP cyclohydrolase I family. In terms of assembly, homomer.

It carries out the reaction GTP + H2O = 7,8-dihydroneopterin 3'-triphosphate + formate + H(+). The protein operates within cofactor biosynthesis; 7,8-dihydroneopterin triphosphate biosynthesis; 7,8-dihydroneopterin triphosphate from GTP: step 1/1. The sequence is that of GTP cyclohydrolase 1 from Shigella boydii serotype 18 (strain CDC 3083-94 / BS512).